The sequence spans 212 residues: Peptide methionine sulfoxide reductase MsrA (212 aa).

C51 is an active-site residue.

It belongs to the MsrA Met sulfoxide reductase family.

It carries out the reaction L-methionyl-[protein] + [thioredoxin]-disulfide + H2O = L-methionyl-(S)-S-oxide-[protein] + [thioredoxin]-dithiol. The catalysed reaction is [thioredoxin]-disulfide + L-methionine + H2O = L-methionine (S)-S-oxide + [thioredoxin]-dithiol. Functionally, has an important function as a repair enzyme for proteins that have been inactivated by oxidation. Catalyzes the reversible oxidation-reduction of methionine sulfoxide in proteins to methionine. This Vibrio cholerae serotype O1 (strain ATCC 39541 / Classical Ogawa 395 / O395) protein is Peptide methionine sulfoxide reductase MsrA.